The sequence spans 129 residues: Small ribosomal subunit protein uS11 (129 aa).

Belongs to the universal ribosomal protein uS11 family. As to quaternary structure, part of the 30S ribosomal subunit. Interacts with proteins S7 and S18. Binds to IF-3.

In terms of biological role, located on the platform of the 30S subunit, it bridges several disparate RNA helices of the 16S rRNA. Forms part of the Shine-Dalgarno cleft in the 70S ribosome. The sequence is that of Small ribosomal subunit protein uS11 from Jannaschia sp. (strain CCS1).